The sequence spans 151 residues: Ubiquitin-conjugating enzyme E2 N (151 aa).

Residues S3 to V149 enclose the UBC core domain. C87 serves as the catalytic Glycyl thioester intermediate.

The protein belongs to the ubiquitin-conjugating enzyme family.

It catalyses the reaction S-ubiquitinyl-[E1 ubiquitin-activating enzyme]-L-cysteine + [E2 ubiquitin-conjugating enzyme]-L-cysteine = [E1 ubiquitin-activating enzyme]-L-cysteine + S-ubiquitinyl-[E2 ubiquitin-conjugating enzyme]-L-cysteine.. It participates in protein modification; protein ubiquitination. Its function is as follows. Catalyzes the covalent attachment of ubiquitin to other proteins. In Drosophila melanogaster (Fruit fly), this protein is Ubiquitin-conjugating enzyme E2 N (ben).